A 185-amino-acid polypeptide reads, in one-letter code: Ribosome-recycling factor (185 aa).

The protein belongs to the RRF family.

The protein resides in the cytoplasm. Responsible for the release of ribosomes from messenger RNA at the termination of protein biosynthesis. May increase the efficiency of translation by recycling ribosomes from one round of translation to another. This Clostridium botulinum (strain Eklund 17B / Type B) protein is Ribosome-recycling factor.